We begin with the raw amino-acid sequence, 96 residues long: Large ribosomal subunit protein uL23 (96 aa).

This sequence belongs to the universal ribosomal protein uL23 family. As to quaternary structure, part of the 50S ribosomal subunit. Contacts protein L29, and trigger factor when it is bound to the ribosome.

One of the early assembly proteins it binds 23S rRNA. One of the proteins that surrounds the polypeptide exit tunnel on the outside of the ribosome. Forms the main docking site for trigger factor binding to the ribosome. In Solidesulfovibrio magneticus (strain ATCC 700980 / DSM 13731 / RS-1) (Desulfovibrio magneticus), this protein is Large ribosomal subunit protein uL23.